Here is a 357-residue protein sequence, read N- to C-terminus: MAAVVAMDTQLMLGVGLIEKDSNGEALWVWCYPSTTASLRNLLLRKCCLTDENKLLHPFVFGQYRRTWFYVTTVEVPDSSVLKKVTHFSIVLTAKDFNPEKYAAFTRILCRIYLKYGSPVKMMESYIAVLTKGICQSEENGSFLSRDFDGRKAYLAGSIKDIVSQFGMETVILHTALMLKKRIVVYHPKIEAVQEFTRTLPALVWHRQDWTILHSYMHLHAEELEGLQMCTGYIAGFVELEVSNRPDLYDVFVNLADSEITIAPLAKEAMTMGKLHKEIGQLIVQSAEDPEKSDSQVIQDIALKTKEIFTHLAPFSEVSDDGGKVILNVEALKQQRFPPATENFLYHLAAAEQMLKV.

The uDENN domain occupies Met1 to Gln136. Positions Lys152–Gln299 constitute a cDENN domain. The 57-residue stretch at Ile301 to Val357 folds into the dDENN domain.

This sequence belongs to the DENND10 family. Interacts with the coiled-coil heterodimer of CCDC22 and CCDC93; the interaction is direct. Interacts with RAB27A and RAB27B (GDP-bound forms preferentially).

It localises to the late endosome. Its function is as follows. Guanine nucleotide exchange factor (GEF) regulating homeostasis of late endocytic pathway, including endosomal positioning, maturation and secretion, possibly through activating Rab proteins such as RAB27A and RAB27B. Promotes the exchange of GDP to GTP, converting inactive GDP-bound RAB27A and RAB27B into their active GTP-bound form. The protein is DENN domain-containing protein 10 of Mus musculus (Mouse).